A 508-amino-acid chain; its full sequence is Cell death protein 3 (508 aa).

Positions 1 to 223 are excised as a propeptide; sequence MMRQDRRNLL…FHEEDMNYVD (223 aa). A CARD domain is found at 2-91; sequence MRQDRRNLLE…HELAAVLEPL (90 aa). 2 disordered regions span residues 106–130 and 148–184; these read PMSPASHRRSRALSPSTFSSPTRVH and YTRARSTSRSSRPLHASDRHNYVSPSNSFQSQPSSAN. The span at 118–127 shows a compositional bias: polar residues; it reads LSPSTFSSPT. Over residues 171-184 the composition is skewed to low complexity; that stretch reads SPSNSFQSQPSSAN. Active-site residues include histidine 317 and cysteine 360. Residues 392–407 are required for interaction with ced-4; that stretch reads GPLFNFLGCVRPQAQQ.

The protein belongs to the peptidase C14A family. As to quaternary structure, the active form is probably a heterodimer of the p17 subunit with either the p15 or p13 subunit which are all derived from the precursor by autocatalysis. Interacts with octameric ced-4 (two ced-3 zymogens per one ced-4 octamer); the interaction causes the autoproteolytic cleavage and activation of ced-3. Processed ced-3 also interacts with ced-4 octamer to form a stable holoenzyme. Interacts (via large subunit p17) with csp-3; the interaction prevents ced-3 autoactivation and delays ced-4-induced ced-3 processing. Interacts (via large subunit p17 or small subunit p13 or p15) with csp-2; the interaction inhibits ced-3 autoactivation. Interacts (via propeptide) with nucleoporin npp-14; the interaction tethers ced-3 to the nuclear membrane and prevents its autoprocessing in absence of ced-4. Interacts with dct-1. May form a complex composed of ced-3, ced-4 and mac-1. In terms of processing, autocatalytic cleavage removes the propeptide and generates the catalytic subunit p17 and two non-catalytic subunits p15 and p13; autoproteolysis is induced by ced-4 oligomer. Cleaved by caspase csp-1 probably at Asp-146 and Asp-376.

It is found in the nucleus membrane. The protein resides in the perikaryon. Its subcellular location is the synapse. The protein localises to the mitochondrion. It localises to the cytoplasm. It is found in the perinuclear region. The catalysed reaction is Strict requirement for an Asp residue at position P1 and has a preferred cleavage sequence of Asp-Glu-Val-Asp-|-.. Octameric ced-4 activates zymogen autoprocessing and enhances activity of processed ced-3. Zymogen autoactivation is inhibited by csp-3. csp-3 has no effect on active ced-3. Zymogen autoactivation is inhibited by csp-2. Inhibited by cysteine protease inhibitor iodoacetic acid (CH3COOI). Inhibited by benzyloxycarbonyl-DEVD-fluoro-methyl ketone (zDEVD-fmk). Inhibited by benzyloxycarbonyl-VAD-fluoro-methyl ketone (zVAD-fmk). Not inhibited by N-[N-(L-3-transcarboxirane-2-carbonyl)-leucyl]-agmatine (E-64) or by the serine and cysteine protease inhibitor L-1-chloro-3-[4-to-osylamido]-7-amino-2-heptanone (TLCK). Its function is as follows. Acts as a cysteine protease in controlling programmed cell death (apoptosis) by proteolytically activating or inactivating a wide range of substrates. Component of the egl-1, ced-9, ced-4 and ced-3 apoptotic signaling cascade required for the initiation of programmed cell death in cells fated to die during embryonic and postembryonic development. During oogenesis, required for germline apoptosis downstream of ced-9 and ced-4 but independently of egl-1. By cleaving and activating ced-8, promotes phosphatidylserine exposure on the surface of apoptotic cells; phosphatidylserine is a specific marker only present at the surface of apoptotic cells and acts as a specific signal for engulfment. By cleaving and converting dcr-1 into a deoxyribonuclease (DNase), promotes apoptotic chromosomal DNA fragmentation. By cleaving mitochondrial fission protein drp-1, may regulate the removal of mitochondria during apoptosis. During germline apoptosis, cleaves translation initiation factor ifg-1 (isoform p170) promoting cap-independent translation. During male tail morphogenesis, promotes apoptosis of the tail-spike cell downstream of ced-4 but independently of egl-1 and ced-9. By cleaving cnt-1, prevents the activation of the prosurvival akt-1/2 signaling pathway and thus promotes apoptosis. Downstream of ced-4, may play a role in sex-specific cell apoptosis by cleaving sex-determining protein fem-1. May regulate germline apoptosis in response to DNA damage, probably downstream of let-60/ras and mpk-1 pathway. Cleaves ced-9 in vitro. Cleaves csp-2 isoform b resulting in the removal of the propeptide and the generation of csp-2 subunit p31 in vitro. Independently of its apoptotic role has additional functions. Probably by cleaving and thereby activating actin-severing protein gsnl-1, required for the elimination of transient presynaptic components during larval development downstream of egl-1, ced-9 and ced-4 pathway. Together with ain-1, a component of the miRNA-induced-silencing complex (miRISC), regulates temporal cell fate patterning during larval development. Acts in cell fate patterning by cleaving heterochronic protein lin-28, likely promoting its degradation. Also cleaves heterochronic protein lin-14 and exonuclease disl-2 in vitro. Downstream of calreticulin crt-1 and ced-4 and independently of egl-1 and ced-9, plays a role in the initial steps of axonal regrowth following axotomy. Cleaves 14-3-3-like protein ftt-2, tubulin tbb-2 and calreticulin crt-1 in vitro. Plays also a role in resistance to S.typhimurium-mediated infection. The polypeptide is Cell death protein 3 (Caenorhabditis remanei (Caenorhabditis vulgaris)).